The following is an 837-amino-acid chain: Telomere length regulation protein TEL2 homolog (837 aa).

Residue methionine 1 is modified to N-acetylmethionine. A hydroxyproline mark is found at proline 374, proline 419, and proline 422. A disordered region spans residues 444-472; it reads QPAGDGASEAGTSLVPATAEPPAETPAEI. Serine 456 carries the post-translational modification Phosphoserine. Residues 459–471 show a composition bias toward low complexity; it reads PATAEPPAETPAE. Serine 485 carries the post-translational modification Phosphoserine; by CK2. Phosphoserine occurs at positions 487 and 491. The tract at residues 627-651 is disordered; that stretch reads GCLGRTPQPGSPSPNTPCLPEAAVS. 2 positions are modified to phosphoserine: serine 688 and serine 836.

Belongs to the TEL2 family. Component of the TTT complex composed of TELO2, TTI1 and TTI2. Interacts with ATM, ATR, MTOR, PRKDC, RUVBL2, TTI1, TTI2, SMG1 and TRRAP. Component of the mTORC1 and mTORC2 complexes. Interacts (phosphorylated form) with PIH1D1 which mediates interaction of TELO2 with the R2TP complex composed of RUVBL1, RUVBL2, PIH1D1, and RPAP3. Hydroxylation by PHD3 is required for a proper interaction with ATR, and activation of the ATR/CHK1/p53 pathway following DNA damage. Post-translationally, phosphorylated at Ser-485 by CK2 following growth factor deprivation, leading to its subsequent ubiquitination by the SCF(FBXO9) complex. Phosphorylation by CK2 only takes place when TELO2 is bound to mTORC1, not mTORC2; leading to selective ubiquitination of mTORC1-associated protein. In terms of processing, ubiquitinated by the SCF(FBXO9) complex following phosphorylation by CK2 in response to growth factor deprivation, leading to its degradation by the proteasome. Only mTORC1-associated protein is ubiquitinated and degraded, leading to selective inactivation of mTORC1 to restrain cell growth and protein translation, while mTORC2 is activated due to the relief of feedback inhibition by mTORC1.

Its subcellular location is the cytoplasm. It localises to the membrane. The protein localises to the nucleus. The protein resides in the chromosome. It is found in the telomere. Its function is as follows. Regulator of the DNA damage response (DDR). Part of the TTT complex that is required to stabilize protein levels of the phosphatidylinositol 3-kinase-related protein kinase (PIKK) family proteins. The TTT complex is involved in the cellular resistance to DNA damage stresses, like ionizing radiation (IR), ultraviolet (UV) and mitomycin C (MMC). Together with the TTT complex and HSP90 may participate in the proper folding of newly synthesized PIKKs. Promotes assembly, stabilizes and maintains the activity of mTORC1 and mTORC2 complexes, which regulate cell growth and survival in response to nutrient and hormonal signals. May be involved in telomere length regulation. The sequence is that of Telomere length regulation protein TEL2 homolog (TELO2) from Homo sapiens (Human).